The primary structure comprises 258 residues: Imidazole glycerol phosphate synthase subunit HisF (258 aa).

Residues Asp12 and Asp131 contribute to the active site.

It belongs to the HisA/HisF family. In terms of assembly, heterodimer of HisH and HisF.

It is found in the cytoplasm. The enzyme catalyses 5-[(5-phospho-1-deoxy-D-ribulos-1-ylimino)methylamino]-1-(5-phospho-beta-D-ribosyl)imidazole-4-carboxamide + L-glutamine = D-erythro-1-(imidazol-4-yl)glycerol 3-phosphate + 5-amino-1-(5-phospho-beta-D-ribosyl)imidazole-4-carboxamide + L-glutamate + H(+). It participates in amino-acid biosynthesis; L-histidine biosynthesis; L-histidine from 5-phospho-alpha-D-ribose 1-diphosphate: step 5/9. IGPS catalyzes the conversion of PRFAR and glutamine to IGP, AICAR and glutamate. The HisF subunit catalyzes the cyclization activity that produces IGP and AICAR from PRFAR using the ammonia provided by the HisH subunit. The polypeptide is Imidazole glycerol phosphate synthase subunit HisF (Sinorhizobium fredii (strain NBRC 101917 / NGR234)).